A 340-amino-acid chain; its full sequence is Heat-inducible transcription repressor HrcA (340 aa).

Belongs to the HrcA family.

Negative regulator of class I heat shock genes (grpE-dnaK-dnaJ and groELS operons). Prevents heat-shock induction of these operons. This chain is Heat-inducible transcription repressor HrcA, found in Mycoplasma mycoides subsp. mycoides SC (strain CCUG 32753 / NCTC 10114 / PG1).